The primary structure comprises 88 residues: Cell division topological specificity factor (88 aa).

The protein belongs to the MinE family.

Functionally, prevents the cell division inhibition by proteins MinC and MinD at internal division sites while permitting inhibition at polar sites. This ensures cell division at the proper site by restricting the formation of a division septum at the midpoint of the long axis of the cell. The polypeptide is Cell division topological specificity factor (Aeromonas hydrophila subsp. hydrophila (strain ATCC 7966 / DSM 30187 / BCRC 13018 / CCUG 14551 / JCM 1027 / KCTC 2358 / NCIMB 9240 / NCTC 8049)).